A 125-amino-acid chain; its full sequence is Large ribosomal subunit protein bL19 (125 aa).

This sequence belongs to the bacterial ribosomal protein bL19 family.

This protein is located at the 30S-50S ribosomal subunit interface and may play a role in the structure and function of the aminoacyl-tRNA binding site. This chain is Large ribosomal subunit protein bL19, found in Wolbachia pipientis subsp. Culex pipiens (strain wPip).